Reading from the N-terminus, the 246-residue chain is Proteasome subunit alpha (246 aa).

It belongs to the peptidase T1A family. The 20S proteasome core is composed of 14 alpha and 14 beta subunits that assemble into four stacked heptameric rings, resulting in a barrel-shaped structure. The two inner rings, each composed of seven catalytic beta subunits, are sandwiched by two outer rings, each composed of seven alpha subunits. The catalytic chamber with the active sites is on the inside of the barrel. Has probably a gated structure, the ends of the cylinder being occluded by the N-termini of the alpha-subunits. Is likely capped at one or both ends by the proteasome regulatory ATPase, PAN.

The protein localises to the cytoplasm. Its activity is regulated as follows. The formation of the proteasomal ATPase PAN-20S proteasome complex, via the docking of the C-termini of PAN into the intersubunit pockets in the alpha-rings, triggers opening of the gate for substrate entry. Interconversion between the open-gate and close-gate conformations leads to a dynamic regulation of the 20S proteasome proteolysis activity. In terms of biological role, component of the proteasome core, a large protease complex with broad specificity involved in protein degradation. This chain is Proteasome subunit alpha, found in Archaeoglobus fulgidus (strain ATCC 49558 / DSM 4304 / JCM 9628 / NBRC 100126 / VC-16).